The sequence spans 224 residues: Protein DEHYDRATION-INDUCED 19 homolog 4 (224 aa).

The segment covering 1–12 (MDSNWINCPSVF) has biased composition (polar residues). Positions 1–23 (MDSNWINCPSVFSSSSSSSRRCQ) are disordered. Positions 13–23 (SSSSSSSRRCQ) are enriched in low complexity. The residue at position 117 (T117) is a Phosphothreonine.

Belongs to the Di19 family. In terms of processing, phosphorylated in vitro by CPK3 or CPK11. Expressed in seedlings, roots, leaves, stems, flowers and siliques.

The protein resides in the cytoplasm. Its subcellular location is the perinuclear region. The polypeptide is Protein DEHYDRATION-INDUCED 19 homolog 4 (DI19-4) (Arabidopsis thaliana (Mouse-ear cress)).